A 305-amino-acid polypeptide reads, in one-letter code: Oligopeptide transport system permease protein OppC (305 aa).

The next 6 helical transmembrane spans lie at 43-63 (AMVG…APMF), 105-125 (ISIF…VIWG), 166-185 (LFTI…ARIV), 212-232 (LFKH…TLTV), 236-256 (IFTE…LASW), and 274-294 (LFFP…VGDG). The region spanning 103 to 292 (ARISIFIGVA…ITMFGFNVVG (190 aa)) is the ABC transmembrane type-1 domain.

This sequence belongs to the binding-protein-dependent transport system permease family. OppBC subfamily. As to quaternary structure, the complex is composed of two ATP-binding proteins (OppD and OppF), two transmembrane proteins (OppB and OppC) and a solute-binding protein (OppA).

The protein localises to the cell membrane. Functionally, part of the ABC transporter complex OppABCDF involved in the uptake of oligopeptides. Probably responsible for the translocation of the substrate across the membrane. Required for sporulation and genetic competence. The protein is Oligopeptide transport system permease protein OppC of Bacillus subtilis (strain 168).